We begin with the raw amino-acid sequence, 158 residues long: Small ribosomal subunit protein uS13 (158 aa).

It belongs to the universal ribosomal protein uS13 family. As to quaternary structure, part of the 30S ribosomal subunit. Forms a loose heterodimer with protein S19. Forms two bridges to the 50S subunit in the 70S ribosome.

Located at the top of the head of the 30S subunit, it contacts several helices of the 16S rRNA. In the 70S ribosome it contacts the 23S rRNA (bridge B1a) and protein L5 of the 50S subunit (bridge B1b), connecting the 2 subunits; these bridges are implicated in subunit movement. This Picrophilus torridus (strain ATCC 700027 / DSM 9790 / JCM 10055 / NBRC 100828 / KAW 2/3) protein is Small ribosomal subunit protein uS13.